Consider the following 310-residue polypeptide: Mitochondrial citrate transporter E (310 aa).

Solcar repeat units lie at residues 2 to 95 (STTT…LRQG), 107 to 199 (QSLG…AKRR), and 208 to 293 (DGPG…TNKI). 6 helical membrane passes run 8–28 (FIAGGVAACGAVTVTHSFETV), 72–92 (GSAYIYQVLLNGCRLGFYEPL), 114–133 (LAGAASGIIGAAAGSPFFLV), 178–198 (AMVRTGFGSSVQLPTYFFAKR), 211–228 (GLHLASSTASGFVVCCVM), and 265–286 (IYKGYFAHLARILPHTILTLSL).

The protein belongs to the mitochondrial carrier (TC 2.A.29) family.

The protein resides in the mitochondrion inner membrane. In terms of biological role, mitochondrial transporter that does not mediate citrate export from mitochondria to cytoplasm. Its exact function has still to be determined. The chain is Mitochondrial citrate transporter E from Aspergillus niger (strain ATCC 1015 / CBS 113.46 / FGSC A1144 / LSHB Ac4 / NCTC 3858a / NRRL 328 / USDA 3528.7).